A 362-amino-acid polypeptide reads, in one-letter code: Methionine import ATP-binding protein MetN (362 aa).

The ABC transporter domain occupies 2–241; sequence IHIENLSKTY…PRHEVTRAMV (240 aa). 38–45 serves as a coordination point for ATP; it reads GPSGAGKS.

Belongs to the ABC transporter superfamily. Methionine importer (TC 3.A.1.24) family. The complex is composed of two ATP-binding proteins (MetN), two transmembrane proteins (MetI) and a solute-binding protein (MetQ).

The protein resides in the cell inner membrane. It carries out the reaction L-methionine(out) + ATP + H2O = L-methionine(in) + ADP + phosphate + H(+). It catalyses the reaction D-methionine(out) + ATP + H2O = D-methionine(in) + ADP + phosphate + H(+). Part of the ABC transporter complex MetNIQ involved in methionine import. Responsible for energy coupling to the transport system. In Bordetella bronchiseptica (strain ATCC BAA-588 / NCTC 13252 / RB50) (Alcaligenes bronchisepticus), this protein is Methionine import ATP-binding protein MetN.